Reading from the N-terminus, the 324-residue chain is PGR5-like protein 1A, chloroplastic (324 aa).

A chloroplast-targeting transit peptide spans 1–60 (MGSKMLFSLTSPRLFSAVSRKPSSSFSPSPPSPSSRTQWTQLSPGKSISLRRRVFLLPAK). Residues 16–42 (SAVSRKPSSSFSPSPPSPSSRTQWTQL) are disordered. Over 61–198 (ATTEQSGPVG…KVYSDLAVDY (138 aa)) the chain is Stromal. C82 and C183 form a disulfide bridge. A helical membrane pass occupies residues 199–219 (FKMLLLNVPATVVALGLFFFL). Residues 220–236 (DDITGFEITYIMELPEP) lie on the Lumenal, thylakoid side of the membrane. The chain crosses the membrane as a helical span at residues 237–257 (YSFIFTWFAAVPVIVYLALSI). The Stromal segment spans residues 258-324 (TKLIIKDFLI…LITLPEGSQA (67 aa)).

This sequence belongs to the PGR5 family. Homodimer and heterodimer with PGR5. Interacts with PGR5, FD2, petC, psaD1, LFNR1 and LFNR2. Also interacts with a Fe-containing cofactor (FCC). In terms of processing, disulfide bonds; Cys-300 and Cys-303 are probably involved in the formation of disulfide bridges with 'Cys-11' and 'Cys-105' of PGR5 while Cys-272 and Cys-275 are probably involved in the binding of a Fe-containing cofactor (FCC).

It is found in the plastid. The protein localises to the chloroplast thylakoid membrane. Inhibited by antimycin A. In terms of biological role, ferredoxin-plastoquinone reductase involved in cyclic electron flow (CEF) around photosystem I. The homodimer is probably not involved in CEF. The chain is PGR5-like protein 1A, chloroplastic (PGRL1A) from Arabidopsis thaliana (Mouse-ear cress).